Consider the following 321-residue polypeptide: MIKLLYPEFWQKRNIIAYLLLPISVIYQFLGYLRASLARPIMLPAKVICVGNCSVGGTGKTQIVMYLAKLLKARNVSFVIVTKAYGSNLTSATTIHQGHTALEVGDEGVILAKYGAVIATKNIKEIVPLLNELKPDIIIVDDFLQNPYFHKDFTIVSVDSQRLFGNGFLIPAGPLRQYPNKALDAADLIFLVSSHQDKIPNILTPYVNKLINAQIVPSNNIDKTKNYFAFSGIGNPERFFATLKNYGLNITGYKIFPDHYNYLQADLENLYSLAKEHNATLVTTRKDHVKFNDLNNNIVCLDVELSINHPDLLNEKIFKKA.

54–61 (SVGGTGKT) contributes to the ATP binding site.

It belongs to the LpxK family.

The enzyme catalyses a lipid A disaccharide + ATP = a lipid IVA + ADP + H(+). It participates in glycolipid biosynthesis; lipid IV(A) biosynthesis; lipid IV(A) from (3R)-3-hydroxytetradecanoyl-[acyl-carrier-protein] and UDP-N-acetyl-alpha-D-glucosamine: step 6/6. Its function is as follows. Transfers the gamma-phosphate of ATP to the 4'-position of a tetraacyldisaccharide 1-phosphate intermediate (termed DS-1-P) to form tetraacyldisaccharide 1,4'-bis-phosphate (lipid IVA). This Rickettsia africae (strain ESF-5) protein is Tetraacyldisaccharide 4'-kinase.